The primary structure comprises 189 residues: MKFGFDIDDTLIDLRQHAFHLYNKKLNKKVGLDVFHSLKTIEIHEAFGMTSEEGSHMWNSLLDEIYYTSCSPFPYAVETLQELEKQGHEIYYITARPKEHGEQTKKWLIEKGFPVHEDRFFYGMKDEEKIHFIQEIKLNYFFDDKPAVLETLIGKPINVYAKTTSYNQHLNIPRITSWTELGDIIKKEM.

This sequence belongs to the 5'(3')-deoxyribonucleotidase family.

The polypeptide is Putative nucleotidase BC_3386 (Bacillus cereus (strain ATCC 14579 / DSM 31 / CCUG 7414 / JCM 2152 / NBRC 15305 / NCIMB 9373 / NCTC 2599 / NRRL B-3711)).